The following is a 728-amino-acid chain: Catalase-peroxidase 2 (728 aa).

A disordered region spans residues 1-20; that stretch reads MSNEGKCPFNHGKRNGTTNR. A cross-link (tryptophyl-tyrosyl-methioninium (Trp-Tyr) (with M-240)) is located at residues 91 to 214; that stretch reads WHSAGTYRTG…LAAVQMGLIY (124 aa). The active-site Proton acceptor is His-92. A cross-link (tryptophyl-tyrosyl-methioninium (Tyr-Met) (with W-91)) is located at residues 214–240; it reads YVNPEGPNGNPDPLASARDIRETFARM. His-255 lines the heme b pocket. The interval 335 to 355 is disordered; the sequence is AHQWQPKGGAGADSVPDPFEP.

The protein belongs to the peroxidase family. Peroxidase/catalase subfamily. In terms of assembly, homodimer or homotetramer. Heme b serves as cofactor. Formation of the three residue Trp-Tyr-Met cross-link is important for the catalase, but not the peroxidase activity of the enzyme.

The catalysed reaction is H2O2 + AH2 = A + 2 H2O. The enzyme catalyses 2 H2O2 = O2 + 2 H2O. Bifunctional enzyme with both catalase and broad-spectrum peroxidase activity. The protein is Catalase-peroxidase 2 of Burkholderia cenocepacia (strain HI2424).